A 141-amino-acid polypeptide reads, in one-letter code: Regulator of ribonuclease activity B (141 aa).

Residues 112-141 (GTYFEDPNAPDDEDDNDDLFPPEEDEPRLH) form a disordered region. Positions 119–141 (NAPDDEDDNDDLFPPEEDEPRLH) are enriched in acidic residues.

Belongs to the RraB family. In terms of assembly, interacts with the C-terminal region of Rne.

The protein resides in the cytoplasm. In terms of biological role, globally modulates RNA abundance by binding to RNase E (Rne) and regulating its endonucleolytic activity. Can modulate Rne action in a substrate-dependent manner by altering the composition of the degradosome. The chain is Regulator of ribonuclease activity B from Xenorhabdus nematophila (strain ATCC 19061 / DSM 3370 / CCUG 14189 / LMG 1036 / NCIMB 9965 / AN6).